The following is a 161-amino-acid chain: RNA pyrophosphohydrolase (161 aa).

In terms of domain architecture, Nudix hydrolase spans 6-149 (GFRPNVGIIL…KRDVYRKAMV (144 aa)). The Nudix box motif lies at 38-59 (GGIQFGETPEQALFRELREEIG).

It belongs to the Nudix hydrolase family. RppH subfamily. It depends on a divalent metal cation as a cofactor.

Its function is as follows. Accelerates the degradation of transcripts by removing pyrophosphate from the 5'-end of triphosphorylated RNA, leading to a more labile monophosphorylated state that can stimulate subsequent ribonuclease cleavage. The sequence is that of RNA pyrophosphohydrolase from Acinetobacter baumannii (strain AB307-0294).